A 528-amino-acid polypeptide reads, in one-letter code: Acid-sensing ion channel 1 (528 aa).

Topologically, residues 1-49 (MELKAEEEEVGGVQPVSIQAFASSSTLHGLAHIFSYERLSLKRALWALC) are cytoplasmic. A helical transmembrane segment spans residues 50-66 (FLGSLAVLLCVCTERVQ). Residues 67-427 (YYFHYHHVTK…ETIEQKKAYE (361 aa)) are Extracellular-facing. Intrachain disulfides connect Cys-93/Cys-194, Cys-172/Cys-179, Cys-290/Cys-367, Cys-310/Cys-363, Cys-314/Cys-361, Cys-323/Cys-345, and Cys-325/Cys-337. N-linked (GlcNAc...) asparagine glycosylation is found at Asn-368 and Asn-395. Residues 428–458 (IAGLLGDIGGQMGLFIGASILTVLELFDYAY) traverse the membrane as a discontinuously helical segment. The GAS motif; ion selectivity filter signature appears at 444–446 (GAS). Topologically, residues 459 to 528 (EVIKHKLCRR…ARGTFEDFTC (70 aa)) are cytoplasmic. A Phosphoserine; by PKA modification is found at Ser-479. Ser-499 bears the Phosphoserine mark.

The protein belongs to the amiloride-sensitive sodium channel (TC 1.A.6) family. ASIC1 subfamily. Forms functional homotrimeric channels. Forms heterotrimers with other ASIC proteins, resulting in channels with distinct properties. Interacts with PICK1; regulates ASIC1 clustering in membranes. Interacts with STOM; alters heterotrimeric channels activity. Post-translationally, pH-gating could be regulated by serine proteases. In terms of processing, phosphorylation by PKA regulates interaction with PICK1 and subcellular localization. Phosphorylation by PKC may regulate the channel. As to expression, expressed in neurons throughout the central and peripheral nervous system.

The protein localises to the cell membrane. It is found in the postsynaptic cell membrane. Its subcellular location is the cell projection. The protein resides in the dendrite. The catalysed reaction is Na(+)(in) = Na(+)(out). It catalyses the reaction K(+)(in) = K(+)(out). It carries out the reaction Li(+)(in) = Li(+)(out). The enzyme catalyses Ca(2+)(in) = Ca(2+)(out). Its activity is regulated as follows. Potentiated by FMRFamide-related neuropeptides, which are induced during inflammation and modulate pain responses. Inhibited by the diuretic drug amiloride. Spider venom psalmotoxin-1 inhibits the channel by locking it in its desensitized conformation. The homotrimeric channel is inhibited by the spider venom pi-theraphotoxin-Hm3a. Homotrimeric and heterotrimeric (with ASIC2 isoform 1) channels are inhibited by the snake venom mambalgin-1, which prevents proton-induced transitions from the resting closed state to the active and/or desensitized states. Inhibited by Texas coral snake toxin MitTx1. Forms voltage-independent, pH-gated trimeric sodium channels that act as postsynaptic excitatory receptors in the nervous system, playing a crucial role in regulating synaptic plasticity, learning, and memory. Upon extracellular pH drop this channel elicits transient, fast activating, and completely desensitizing inward currents. Displays high selectivity for sodium ions but can also permit the permeation of other cations. Regulates more or less directly intracellular calcium concentration and CaMKII phosphorylation, and thereby the density of dendritic spines. Modulates neuronal activity in the circuits underlying innate fear. In terms of biological role, has high selectivity for sodium ions, but can also be permeable to other cations including calcium, lithium and potassium. Its function is as follows. Produces acid activated currents with a reduced amplitude and inactivates faster. Has high selectivity for sodium ions but also supports a calcium-mediated current which is sustained and maintained as long as acidic conditions are present. Also potentially permeable to lithium and potassium. Functionally, has no measurable proton-gated sodium channel activity in vitro. In Homo sapiens (Human), this protein is Acid-sensing ion channel 1.